The chain runs to 867 residues: cGMP-dependent 3',5'-cGMP phosphodiesterase A (867 aa).

The span at 121–146 (IINSSSSTTDTSKTSPIKKQTSSSSP) shows a compositional bias: low complexity. 2 disordered regions span residues 121 to 167 (IINS…SQQQ) and 180 to 241 (HHHH…STFP). The span at 147–160 (PLSPQQQQPPPPLV) shows a compositional bias: pro residues. Positions 191–220 (NDNNNNTTTNNNNIEILEQQQQQQQQQQQQ) are enriched in low complexity. The span at 221-232 (QDEDSTDVDEEF) shows a compositional bias: acidic residues. The segment at 357-503 (STTGFVLWIN…GDTCYDPNRI (147 aa)) is phosphodiesterase activity. The a divalent metal cation site is built by histidine 399, histidine 401, and aspartate 403. Residues 607–721 (IFRS…WEMR) and 734–851 (VFSR…IFVD) contribute to the a nucleoside 3',5'-cyclic phosphate site.

The protein belongs to the metallo-beta-lactamase superfamily. cNMP phosphodiesterase family. Mn(2+) is required as a cofactor. Requires Mg(2+) as cofactor. The cofactor is Zn(2+).

It localises to the cytoplasm. The protein resides in the cytosol. It catalyses the reaction 3',5'-cyclic GMP + H2O = GMP + H(+). In terms of biological role, phosphodiesterase specific for cGMP, which is activated by cGMP but not by cAMP. Involved in the degradation of intracellular cGMP, contributes to the control of cGMP signals. The protein is cGMP-dependent 3',5'-cGMP phosphodiesterase A (pdeD) of Dictyostelium discoideum (Social amoeba).